The following is a 326-amino-acid chain: Fructose operon regulatory protein (326 aa).

Residues 1-58 (MTLDEIAKLAGVSKTTASYVINGKAQKYRISEKTQHKVMAVVEQYNFRPDHAASALRA) enclose the HTH lacI-type domain. The segment at residues 3–22 (LDEIAKLAGVSKTTASYVIN) is a DNA-binding region (H-T-H motif).

In terms of assembly, homodimer.

Its activity is regulated as follows. Interaction with F1P may induce a structural change in the DNA spacer region between the -35 and -10 elements, thereby facilitating RNAP binding to the promoter to trigger the transcriptional activation of the fru operon. Interaction with F1P does not release FruR from its binding sequence. Regulates the expression of the fruBKA (fru) operon, which encodes proteins involved in the import and metabolism of fructose. In the absence of fructose 1-phosphate (F1P), binds to the promoter region of fruB, interferes with the binding of the RNA polymerase (RNAP) to the promoter and represses the expression of the operon. In the presence of F1P, activates the transcription of the fru operon by facilitating the binding of RNAP to the promoter. Essential for the expression of the fru operon and thus for growth on fructose. The sequence is that of Fructose operon regulatory protein from Vibrio cholerae serotype O1 (strain ATCC 39315 / El Tor Inaba N16961).